Consider the following 649-residue polypeptide: MAEAPQVVETDPDFEPLPRQRSCTWPLPRPEFNQSNSTTSSPAPSGSTAANPDATASLASASAVSTDFMSNLSLLEESEDFARAPGCVAVAAAAAASRGLCGDFQGPEAGCVHSAPPQPPPTGPLSQPPPVPPAAAGPLAGQPRKTSSSRRNAWGNLSYADLITKAIESSAEKRLTLSQIYEWMVKSVPYFKDKGDSNSSAGWKNSIRHNLSLHSKFIRVQNEGTGKSSWWMLNPEGGKSGKSPRRRAASMDNNSKFAKSRGRAAKKKASLQSGQEGPGDSPGSQFSKWPASPGSHSNDDFDNWSTFRPRTSSNASTISGRLSPIMTEQDDLGDGDVHSLVYPPSAAKMASTLPSLSEISNPENMENLLDNLNLLSSPTSLTVSTQSSPGSMMQQTPCYSFAPPNTSLNSPSPNYAKYTYGQSSMSPVPQMPMQTLQDSKSSYGGLNQYNCAPGLLKELLTSDSPPHNDIMSPVDPGVAQPNSRVLGQNVLMGPNSVMPAYGSQAPHNKMMNPSSHTHPGHAQQTSSVNGRALPHVVNTMPHTSAMNRLTPVKTPLQVPLSHPMQMSALGNYSSVSSCNGYGRMGVLHQEKLPSDLDGMFIERLDCDMESIIRNDLMDGDTLDFNFDNVLPNQSFPHSVKTTTHSWVSG.

Disordered stretches follow at residues 1-62 (MAEA…ASAS) and 112-151 (VHSAPPQPPPTGPLSQPPPVPPAAAGPLAGQPRKTSSSRR). Thr-24 bears the Phosphothreonine; by PKB/AKT1 or PKB/AKT2 and SGK1 mark. Residues 33–62 (NQSNSTTSSPAPSGSTAANPDATASLASAS) are compositionally biased toward low complexity. Pro residues predominate over residues 116-135 (PPQPPPTGPLSQPPPVPPAA). The fork-head DNA-binding region spans 154–248 (WGNLSYADLI…KSGKSPRRRA (95 aa)). DNA-binding stretches follow at residues 205 to 212 (NSIRHNLS) and 228 to 231 (SSWW). Ser-206 carries the post-translational modification Phosphoserine; by STK4/MST1. Phosphoserine is present on residues Ser-212, Ser-228, and Ser-229. The segment at 228-339 (SSWWMLNPEG…DDLGDGDVHS (112 aa)) is disordered. An N6-acetyllysine mark is found at Lys-239 and Lys-242. Ser-243 is modified (phosphoserine; by CDK1). Residues Arg-245 and Arg-247 each carry the omega-N-methylarginine; by PRMT1 modification. Residues 245–247 (RRR) carry the Nuclear localization signal motif. At Ser-250 the chain carries Phosphoserine; by PKB/AKT1 and SGK1. 3 positions are modified to N6-acetyllysine: Lys-256, Lys-259, and Lys-268. The span at 258–269 (AKSRGRAAKKKA) shows a compositional bias: basic residues. The tract at residues 277-557 (GPGDSPGSQF…RLTPVKTPLQ (281 aa)) is sufficient for interaction with NLK. Residues Ser-281 and Ser-292 each carry the phosphoserine modification. Residues 303–320 (NWSTFRPRTSSNASTISG) show a composition bias toward polar residues. Residue Ser-313 is modified to Phosphoserine; by PKB/AKT1. At Ser-316 the chain carries Phosphoserine; by CK1 and SGK1. Ser-319 carries the post-translational modification Phosphoserine; by CK1. At Ser-323 the chain carries Phosphoserine. Thr-327 bears the Phosphothreonine mark. Positions 357–453 (SEISNPENME…GGLNQYNCAP (97 aa)) are required for interaction with RUNX2. Lys-417 is subject to N6-acetyllysine. A Required for interaction with SIRT1 motif is present at residues 456 to 460 (LKELL).

Interacts with LRPPRC. Interacts with RUNX2; the interaction inhibits RUNX2 transcriptional activity and mediates the IGF1/insulin-dependent BGLAP expression in osteoblasts Interacts with PPP2R1A; the interaction regulates the dephosphorylation of FOXO1 at Thr-24 and Ser-250 leading to its nuclear import. Interacts with NLK. Interacts with SIRT1; the interaction results in the deacetylation of FOXO1 leading to activation of FOXO1-mediated transcription of genes involved in DNA repair and stress resistance. Binds to CDK1. Interacts with the 14-3-3 proteins, YWHAG and YWHAZ; the interactions require insulin-stimulated phosphorylation on Thr-24, promote nuclear exit and loss of transcriptional activity. Interacts with SKP2; the interaction ubiquitinates FOXO1 leading to its proteasomal degradation. The interaction requires the presence of KRIT1. Interacts (via the C-terminal half) with ATF4 (via its DNA binding domain); the interaction occurs in osteoblasts, regulates glucose homeostasis via suppression of beta-cell proliferation and subsequent decrease in insulin production. Interacts with PRMT1; the interaction methylates FOXO1, prevents PKB/AKT1 phosphorylation and retains FOXO1 in the nucleus. Interacts with EP300 and CREBBP; the interactions acetylate FOXO1. Interacts with SIRT2; the interaction is disrupted in response to oxidative stress or serum deprivation, leading to increased level of acetylated FOXO1, which promotes stress-induced autophagy by stimulating E1-like activating enzyme ATG7. Interacts (acetylated form) with ATG7; the interaction is increased in response to oxidative stress or serum deprivation and promotes the autophagic process leading to cell death. Interacts (acetylated form) with PPARG. Interacts with XBP1; this interaction is direct and leads to FOXO1 ubiquitination and degradation via the proteasome pathway. Interacts (via the Fork-head domain) with CEBPA; the interaction increases when FOXO1 is deacetylated. Interacts with WDFY2. Forms a complex with WDFY2 and AKT1. Interacts with CRY1. Interacts with PPIA/CYPA; the interaction promotes FOXO1 dephosphorylation, nuclear accumulation and transcriptional activity. Interacts with TOX4; FOXO1 is required for full induction of TOX4-dependent activity and the interaction is inhibited by insulin. Interacts (when phosphorylated on Ser-250) with STUB1/CHIP. Phosphorylation by NLK promotes nuclear export and inhibits the transcriptional activity. In response to growth factors, phosphorylation on Thr-24, Ser-250 and Ser-313 by PKB/AKT1 promotes nuclear export and inactivation of transactivational activity. Phosphorylation on Thr-24 is required for binding 14-3-3 proteins. Phosphorylation of Ser-250 decreases DNA-binding activity and promotes the phosphorylation of Thr-24 and Ser-313, permitting phosphorylation of Ser-316 and Ser-319, probably by CDK1, leading to nuclear exclusion and loss of function. Stress signals, such as response to oxygen or nitric oxide, attenuate the PKB/AKT1-mediated phosphorylation leading to nuclear retention. Phosphorylation of Ser-323 is independent of IGF1 and leads to reduced function. Dephosphorylated on Thr-24 and Ser-250 by PP2A in beta-cells under oxidative stress leading to nuclear retention. Phosphorylation of Ser-243 by CDK1 disrupts binding of 14-3-3 proteins leading to nuclear accumulation and has no effect on DNA binding nor transcriptional activity. Phosphorylation by STK4/MST1 on Ser-206, upon oxidative stress, inhibits binding to 14-3-3 proteins and nuclear export. PPIA/CYPA promotes its dephosphorylation on Ser-250. Post-translationally, ubiquitinated by SKP2. Ubiquitination leads to proteasomal degradation. Ubiquitinated by STUB1/CHIP; when Ser-250 is phosphorylated. In terms of processing, methylation inhibits AKT1-mediated phosphorylation at Ser-250 and is increased by oxidative stress. Acetylated. Acetylation at Lys-256 and Lys-268 are necessary for autophagic cell death induction. Deacetylated by SIRT2 in response to oxidative stress or serum deprivation, thereby negatively regulating FOXO1-mediated autophagic cell death. Once in the nucleus, acetylated by CREBBP/EP300. Acetylation diminishes the interaction with target DNA and attenuates the transcriptional activity. It increases the phosphorylation at Ser-250. Deacetylation by SIRT1 results in reactivation of the transcriptional activity. Oxidative stress by hydrogen peroxide treatment appears to promote deacetylation and uncoupling of insulin-induced phosphorylation. By contrast, resveratrol acts independently of acetylation. Acetylated at Lys-417, promoting its localization to the nucleus and transcription factor activity. Deacetylation at Lys-417 by SIRT6, promotes its translocation into the cytoplasm, preventing its transcription factor activity. Deacetylation and subsequent inhibition by SIRT6 has different effects depending on cell types: it inhibits gluconeogenesis in hepatocytes, promotes glucose sensing in pancreatic beta-cells and regulates lipid catabolism in brown adipocytes. In terms of tissue distribution, expressed in the internal elastic lamina of the carotid artery (at protein level).

Its subcellular location is the cytoplasm. The protein resides in the nucleus. Its function is as follows. Transcription factor that is the main target of insulin signaling and regulates metabolic homeostasis in response to oxidative stress. Binds to the insulin response element (IRE) with consensus sequence 5'-TT[G/A]TTTTG-3' and the related Daf-16 family binding element (DBE) with consensus sequence 5'-TT[G/A]TTTAC-3'. Activity suppressed by insulin. Main regulator of redox balance and osteoblast numbers and controls bone mass. Orchestrates the endocrine function of the skeleton in regulating glucose metabolism. Also acts as a key regulator of chondrogenic commitment of skeletal progenitor cells in response to lipid availability: when lipids levels are low, translocates to the nucleus and promotes expression of SOX9, which induces chondrogenic commitment and suppresses fatty acid oxidation. Acts synergistically with ATF4 to suppress osteocalcin/BGLAP activity, increasing glucose levels and triggering glucose intolerance and insulin insensitivity. Also suppresses the transcriptional activity of RUNX2, an upstream activator of osteocalcin/BGLAP. Acts as an inhibitor of glucose sensing in pancreatic beta cells by acting as a transcription repressor and suppressing expression of PDX1. In hepatocytes, promotes gluconeogenesis by acting together with PPARGC1A and CEBPA to activate the expression of genes such as IGFBP1, G6PC1 and PCK1. Also promotes gluconeogenesis by directly promoting expression of PPARGC1A and G6PC1. Important regulator of cell death acting downstream of CDK1, PKB/AKT1 and STK4/MST1. Promotes neural cell death. Mediates insulin action on adipose tissue. Regulates the expression of adipogenic genes such as PPARG during preadipocyte differentiation and, adipocyte size and adipose tissue-specific gene expression in response to excessive calorie intake. Regulates the transcriptional activity of GADD45A and repair of nitric oxide-damaged DNA in beta-cells. Required for the autophagic cell death induction in response to starvation or oxidative stress in a transcription-independent manner. Mediates the function of MLIP in cardiomyocytes hypertrophy and cardiac remodeling. Positive regulator of apoptosis in cardiac smooth muscle cells as a result of its transcriptional activation of pro-apoptotic genes. Regulates endothelial cell (EC) viability and apoptosis in a PPIA/CYPA-dependent manner via transcription of CCL2 and BCL2L11 which are involved in EC chemotaxis and apoptosis. This Rattus norvegicus (Rat) protein is Forkhead box protein O1 (Foxo1).